Here is a 250-residue protein sequence, read N- to C-terminus: Hydroxyethylthiazole kinase (250 aa).

Met39 is a binding site for substrate. 2 residues coordinate ATP: Arg114 and Thr159. Substrate is bound at residue Gly186.

Belongs to the Thz kinase family. Mg(2+) serves as cofactor.

The enzyme catalyses 5-(2-hydroxyethyl)-4-methylthiazole + ATP = 4-methyl-5-(2-phosphooxyethyl)-thiazole + ADP + H(+). It participates in cofactor biosynthesis; thiamine diphosphate biosynthesis; 4-methyl-5-(2-phosphoethyl)-thiazole from 5-(2-hydroxyethyl)-4-methylthiazole: step 1/1. Catalyzes the phosphorylation of the hydroxyl group of 4-methyl-5-beta-hydroxyethylthiazole (THZ). The chain is Hydroxyethylthiazole kinase from Lactococcus lactis subsp. cremoris (strain SK11).